The following is a 496-amino-acid chain: MKLHHRMLRHFIAASVIVLTSSFLIFELVASDRAMSAYLRYIVQKADSSFLYDKYQNQSIAAHVMRALAAEQSEVSPEQRRAICEAFESANNTHGLNLTAHKYPGLRGTLQTASTDCDTIVEAAALLPAFDQAVEGNRHQDDYGSGLGMAEEKFHYYLDLNDRYVYFYEPVNVEYFAMNNWSFLQSGSIGIDRKDIEKVFTGRTVLSSIYQDQRTKQNVMSLLTPVYVAGQLKGIVLLDINKNNLRNIFYTHDRPLLWRFLNVTLTDTDSGRDIIINQSEDNLFQYVSYVHDLPGGIRVSLSIDILYFITSSWKSVLFWILTALILLNMVRMHFRLYQNVSRENISDAMTGLYNRKILTPELEQRLQKLVQSGSSVMFIAIDMDKLKQINDTLGHQEGDLAITLLAQAIKQSIRKSDYAIRLGGDEFCIILVDSTPQIAAQLPERIEKRLQHIAPQKEIGFSSGIYAMKENDTLHDAYKASDERLYVNKQNKNSRS.

A run of 2 helical transmembrane segments spans residues 11 to 31 (FIAA…LVAS) and 305 to 325 (ILYF…TALI). In terms of domain architecture, GGDEF spans 374 to 496 (SSVMFIAIDM…VNKQNKNSRS (123 aa)). D382 is a binding site for Mg(2+). Residues N390, H395, and D399 each coordinate substrate. D425 provides a ligand contact to Mg(2+). D425 serves as the catalytic Proton acceptor.

Homodimer. Mg(2+) serves as cofactor.

Its subcellular location is the cell inner membrane. The enzyme catalyses 2 GTP = 3',3'-c-di-GMP + 2 diphosphate. The protein operates within purine metabolism; 3',5'-cyclic di-GMP biosynthesis. In terms of biological role, catalyzes the synthesis of cyclic-di-GMP (c-di-GMP) via the condensation of 2 GTP molecules. In Escherichia coli (strain K12), this protein is Probable diguanylate cyclase DgcJ.